The sequence spans 251 residues: Imidazole glycerol phosphate synthase subunit HisF (251 aa).

Catalysis depends on residues Asp11 and Asp130.

This sequence belongs to the HisA/HisF family. In terms of assembly, heterodimer of HisH and HisF.

It localises to the cytoplasm. The enzyme catalyses 5-[(5-phospho-1-deoxy-D-ribulos-1-ylimino)methylamino]-1-(5-phospho-beta-D-ribosyl)imidazole-4-carboxamide + L-glutamine = D-erythro-1-(imidazol-4-yl)glycerol 3-phosphate + 5-amino-1-(5-phospho-beta-D-ribosyl)imidazole-4-carboxamide + L-glutamate + H(+). It participates in amino-acid biosynthesis; L-histidine biosynthesis; L-histidine from 5-phospho-alpha-D-ribose 1-diphosphate: step 5/9. Functionally, IGPS catalyzes the conversion of PRFAR and glutamine to IGP, AICAR and glutamate. The HisF subunit catalyzes the cyclization activity that produces IGP and AICAR from PRFAR using the ammonia provided by the HisH subunit. In Prosthecochloris aestuarii (strain DSM 271 / SK 413), this protein is Imidazole glycerol phosphate synthase subunit HisF.